The following is a 431-amino-acid chain: Histidinol dehydrogenase 1 (431 aa).

Positions 127, 188, and 211 each coordinate NAD(+). Positions 234, 256, and 259 each coordinate substrate. Zn(2+) is bound by residues Gln-256 and His-259. Catalysis depends on proton acceptor residues Glu-324 and His-325. Substrate is bound by residues His-325, Asp-358, Glu-412, and His-417. Asp-358 is a binding site for Zn(2+). His-417 contributes to the Zn(2+) binding site.

This sequence belongs to the histidinol dehydrogenase family. Zn(2+) serves as cofactor.

It carries out the reaction L-histidinol + 2 NAD(+) + H2O = L-histidine + 2 NADH + 3 H(+). The protein operates within amino-acid biosynthesis; L-histidine biosynthesis; L-histidine from 5-phospho-alpha-D-ribose 1-diphosphate: step 9/9. Functionally, catalyzes the sequential NAD-dependent oxidations of L-histidinol to L-histidinaldehyde and then to L-histidine. This chain is Histidinol dehydrogenase 1 (hisD1), found in Nostoc sp. (strain PCC 7120 / SAG 25.82 / UTEX 2576).